Consider the following 362-residue polypeptide: H-2 class I histocompatibility antigen, D-K alpha chain (362 aa).

The first 24 residues, 1–24 (MGAMVPRTLLLLLAAALAPAQTRA), serve as a signal peptide directing secretion. The alpha-1 stretch occupies residues 25–114 (GPHSLRYFET…LLRYYNQSEG (90 aa)). Residues 25-306 (GPHSLRYFET…RWEPPPSTDS (282 aa)) are Extracellular-facing. Asparagine 110 carries an N-linked (GlcNAc...) asparagine glycan. Residues 115–206 (GSHTIQRLSG…ELGNATLLHT (92 aa)) form an alpha-2 region. Cysteines 125 and 188 form a disulfide. N-linked (GlcNAc...) asparagine glycosylation is found at asparagine 200 and asparagine 280. The segment at 207–298 (DSPKAHVTHH…GLPEPLTLRW (92 aa)) is alpha-3. An Ig-like C1-type domain is found at 209-297 (PKAHVTHHPR…EGLPEPLTLR (89 aa)). Cysteines 227 and 283 form a disulfide. Residues 299 to 306 (EPPPSTDS) form a connecting peptide region. A helical membrane pass occupies residues 307-333 (YMVIVAVLGVLGAVAIIGAVVAFVMMM). Topologically, residues 334-362 (RRNTGGKGGDYTLTPGSQSSEMSLPDCKA) are cytoplasmic. The interval 340 to 362 (KGGDYTLTPGSQSSEMSLPDCKA) is disordered. Phosphoserine is present on residues serine 353 and serine 356.

Belongs to the MHC class I family. Heterodimer of an alpha chain and a beta chain (beta-2-microglobulin). Post-translationally, polyubiquitinated in case of infection by murid herpesvirus 4, by the viral E3 ligase K3 (mK3), leading to target the protein for rapid degradation by the endoplasmic reticulum-associated degradation (ERAD) system. Ubiquitination takes place on lysine, as well as serine and threonine residues present in the cytoplasmic tail. Hydroxylated serine and threonine residues in the cytoplasmic tail are subject to ubiquitination via ester bonds instead of the classical isopeptide linkage. Hydroxylation of residues in the cytoplasmic tail.

It is found in the membrane. Its function is as follows. Involved in the presentation of foreign antigens to the immune system. This chain is H-2 class I histocompatibility antigen, D-K alpha chain (H2-D1), found in Mus musculus (Mouse).